A 242-amino-acid polypeptide reads, in one-letter code: 2-amino-5-formylamino-6-ribosylaminopyrimidin-4(3H)-one 5'-monophosphate deformylase (242 aa).

Fe cation-binding residues include Glu46, His48, Asp57, and His125.

Belongs to the creatininase superfamily. FAPy deformylase family. In terms of assembly, homodimer. Fe(2+) serves as cofactor. Requires Zn(2+) as cofactor.

It catalyses the reaction 2-amino-5-formylamino-6-(5-phospho-D-ribosylamino)pyrimidin-4(3H)-one + H2O = 2,5-diamino-6-(1-D-ribosylamino)pyrimidin-4(3H)-one 5'-phosphate + formate + H(+). The protein operates within cofactor biosynthesis; coenzyme F420 biosynthesis. It participates in cofactor biosynthesis; riboflavin biosynthesis. In terms of biological role, catalyzes the hydrolysis of the formamide of 2-amino-5-formylamino-6-ribosylamino-4(3H)-pyrimidinone 5'-monophosphate (FAPy) to form 2,5-diamino-6-ribosylamino-4(3H)-pyrimidinone 5'-phosphate (APy). The sequence is that of 2-amino-5-formylamino-6-ribosylaminopyrimidin-4(3H)-one 5'-monophosphate deformylase from Methanococcus aeolicus (strain ATCC BAA-1280 / DSM 17508 / OCM 812 / Nankai-3).